Consider the following 244-residue polypeptide: rRNA adenine N-6-methyltransferase (244 aa).

Positions 11, 13, 38, 59, 84, and 101 each coordinate S-adenosyl-L-methionine.

It belongs to the class I-like SAM-binding methyltransferase superfamily. rRNA adenine N(6)-methyltransferase family.

It carries out the reaction adenosine(2085) in 23S rRNA + 2 S-adenosyl-L-methionine = N(6)-dimethyladenosine(2085) in 23S rRNA + 2 S-adenosyl-L-homocysteine + 2 H(+). Functionally, this protein produces a dimethylation of the adenine residue at position 2085 in 23S rRNA, resulting in reduced affinity between ribosomes and macrolide-lincosamide-streptogramin B antibiotics. The polypeptide is rRNA adenine N-6-methyltransferase (ermM) (Staphylococcus epidermidis).